We begin with the raw amino-acid sequence, 97 residues long: Co-chaperonin GroES (97 aa).

It belongs to the GroES chaperonin family. In terms of assembly, heptamer of 7 subunits arranged in a ring. Interacts with the chaperonin GroEL.

It is found in the cytoplasm. Its function is as follows. Together with the chaperonin GroEL, plays an essential role in assisting protein folding. The GroEL-GroES system forms a nano-cage that allows encapsulation of the non-native substrate proteins and provides a physical environment optimized to promote and accelerate protein folding. GroES binds to the apical surface of the GroEL ring, thereby capping the opening of the GroEL channel. This is Co-chaperonin GroES from Pseudomonas savastanoi pv. phaseolicola (strain 1448A / Race 6) (Pseudomonas syringae pv. phaseolicola (strain 1448A / Race 6)).